We begin with the raw amino-acid sequence, 263 residues long: uncharacterized protein (263 aa).

The disordered stretch occupies residues 198–224 (KRSSDSFVSLKPGEDEHSPLEISTCGN).

This is an uncharacterized protein from Saccharomyces cerevisiae (strain ATCC 204508 / S288c) (Baker's yeast).